The following is a 660-amino-acid chain: Anoctamin-10 (660 aa).

Residues 1-207 (MKVTLSALDT…DSIRGYFGET (207 aa)) lie on the Cytoplasmic side of the membrane. A helical membrane pass occupies residues 208-228 (IALYFGFLEYFTFALIPMAVI). Residues 229-240 (GLPYYLFVWEDY) lie on the Extracellular side of the membrane. Residues 241 to 261 (DKYVIFASFNLIWSTVILELW) form a helical membrane-spanning segment. Topologically, residues 262-316 (KRGCANMTYRWGTLLMKRKFEEPRPGFHGVLGINSITGKEEPLYPSYKRQLRIYL) are cytoplasmic. Residues 317-337 (VSLPFVCLCLYFSLYVMMIYF) form a helical membrane-spanning segment. The Extracellular portion of the chain corresponds to 338–352 (DMEVWALGLHENSGS). The helical transmembrane segment at 353–373 (EWTSVLLYVPSIIYAIVIEIM) threads the bilayer. Over 374–400 (NRLYRYAAEFLTSWENHRLESAYQNHL) the chain is Cytoplasmic. Residues 401-421 (ILKVLVFNFLNCFASLFYIAF) form a helical membrane-spanning segment. The Extracellular portion of the chain corresponds to 422 to 500 (VLKDMKLLRQ…YLGTFDDYLE (79 aa)). A helical membrane pass occupies residues 501–521 (LFLQFGYVSLFSCVYPLAAAF). Topologically, residues 522–553 (AVLNNFTEVNSDALKMCRVFKRPFSEPSANIG) are cytoplasmic. The helical transmembrane segment at 554–574 (VWQLAFETMSVISVVTNCALI) threads the bilayer. Over 575 to 590 (GMSPQVNAVFPESKAD) the chain is Extracellular. A helical membrane pass occupies residues 591–611 (LILIVVAVEHALLALKFILAF). At 612 to 660 (AIPDKPRHIQMKLARLEFESLEALKQQQMKLVTENLKEEPMESGKEKAT) the chain is on the cytoplasmic side.

It belongs to the anoctamin family. In terms of tissue distribution, highly expressed in the brain. Intermediate levels in the retina and heart and low levels in the placenta, liver, lung, duodenum, kidney, testis and spleen. In brain areas, highest expression in the frontal and occipital cortices and in the cerebellum. Lower expression in the fetal brain than in the adult brain.

It localises to the cell membrane. Its function is as follows. Does not exhibit calcium-activated chloride channel (CaCC) activity. Can inhibit the activity of ANO1. The sequence is that of Anoctamin-10 (ANO10) from Homo sapiens (Human).